Here is a 2253-residue protein sequence, read N- to C-terminus: Genome polyprotein (2253 aa).

Cys627 and Cys694 are oxidised to a cystine. The Cell attachment site motif lies at 750–752; the sequence is RVD. Residues 825–920 form the LRAT domain; sequence LVYKNRGFYK…LFPGRKEITQ (96 aa). Catalysis depends on for protein 2A H-NC residues His835 and His846. Cys904 functions as the For protein 2A H-NC; Acyl-thioester intermediate in the catalytic mechanism. The chain crosses the membrane as a helical span at residues 1002–1022; the sequence is IVLYCHAPNMLTTMCLGTLLV. An SF3 helicase domain is found at 1205–1366; that stretch reads YSEMMRVNVR…ASYSRNNKLD (162 aa). Tyr1559 carries the post-translational modification O-(5'-phospho-RNA)-tyrosine. The Peptidase C3 domain maps to 1586–1775; it reads APYMQDLEHC…RAAAVHFISN (190 aa). Residues His1626, Asp1664, and Cys1739 each act as for protease 3C activity in the active site. Catalysis depends on Cys1970, which acts as the Acyl-thioester intermediate. Residues 2018–2132 enclose the RdRp catalytic domain; that stretch reads PYNYGLDYSS…SVSSPLDAEY (115 aa). Mg(2+) contacts are provided by Asp2024 and Asp2118.

The protein belongs to the picornaviruses polyprotein family. In terms of assembly, interacts with capsid protein VP1 and capsid protein VP3 to form heterotrimeric protomers. Five protomers subsequently associate to form pentamers which serve as building blocks for the capsid. As to quaternary structure, interacts with capsid protein VP0, and capsid protein VP3 to form heterotrimeric protomers. Five protomers subsequently associate to form pentamers which serve as building blocks for the capsid. Interacts with capsid protein VP0 and capsid protein VP1 to form heterotrimeric protomers. Five protomers subsequently associate to form pentamers which serve as building blocks for the capsid. In terms of assembly, homohexamer; forms a hexameric ring structure with 6-fold symmetry characteristic of AAA+ ATPases. As to quaternary structure, homodimer. Interacts with host ACBD3. Interacts with RNA-directed RNA polymerase. In terms of assembly, interacts with Viral protein genome-linked. It depends on Mg(2+) as a cofactor. VPg is uridylylated by the polymerase and is covalently linked to the 5'-end of genomic RNA. This uridylylated form acts as a nucleotide-peptide primer for the polymerase. Post-translationally, specific enzymatic cleavages yield mature proteins. All cleavages are catalyzed by P3C.

It localises to the virion. Its subcellular location is the host cytoplasm. It is found in the host nucleus. The protein resides in the host nucleolus. The protein localises to the host cytoplasmic vesicle membrane. It localises to the host endoplasmic reticulum membrane. Its subcellular location is the host Golgi apparatus membrane. It carries out the reaction RNA(n) + a ribonucleoside 5'-triphosphate = RNA(n+1) + diphosphate. It catalyses the reaction a ribonucleoside 5'-triphosphate + H2O = a ribonucleoside 5'-diphosphate + phosphate + H(+). The enzyme catalyses Selective cleavage of Gln-|-Gly bond in the poliovirus polyprotein. In other picornavirus reactions Glu may be substituted for Gln, and Ser or Thr for Gly.. Its function is as follows. Forms an icosahedral capsid of pseudo T=3 symmetry together with capsid proteins VP1 and VP3. The capsid is 300 Angstroms in diameter, composed of 60 copies of each capsid protein and enclosing the viral positive strand RNA genome. The attachment to the host cell receptor induces virion internalization predominantly through clathrin-mediated endocytosis. Binds packaging signals present in the viral RNA. Forms an icosahedral capsid of pseudo T=3 symmetry together with capsid proteins VP0 and VP1. The capsid is 300 Angstroms in diameter, composed of 60 copies of each capsid protein and enclosing the viral positive strand RNA genome. The attachment to the host cell receptor induces virion internalization predominantly through clathrin-mediated endocytosis. Binds packaging signals present in the viral RNA. In terms of biological role, forms an icosahedral capsid of pseudo T=3 symmetry together with capsid proteins VP0 and VP3. The capsid is 300 Angstroms in diameter, composed of 60 copies of each capsid protein and enclosing the viral positive strand RNA genome. The attachment to the host cell receptor induces virion internalization predominantly through clathrin-mediated endocytosis. Binds packaging signals present in the viral RNA. Functionally, mediates self-processing of the polyprotein by a translational effect termed 'ribosome skipping'. Mechanistically, 2A1-mediated cleavage occurs between the C-terminal glycine and the proline of the downstream protein 2A2. Its function is as follows. Plays an essential role in the virus replication cycle by acting as a viroporin. Creates a pore in the host endoplasmic reticulum and as a consequence releases Ca2+ in the cytoplasm of infected cell. In turn, high levels of cytoplasmic calcium may trigger membrane trafficking and transport of viral ER-associated proteins to viroplasms, sites of viral genome replication. Induces and associates with structural rearrangements of intracellular membranes. Displays RNA-binding, nucleotide binding and NTPase activities. May play a role in virion morphogenesis and viral RNA encapsidation by interacting with the capsid protein VP3. In terms of biological role, localizes the viral replication complex to the surface of membranous vesicles. It inhibits host cell endoplasmic reticulum-to-Golgi apparatus transport and causes the disassembly of the Golgi complex, possibly through GBF1 interaction. This would result in depletion of MHC, trail receptors and IFN receptors at the host cell surface. Plays an essential role in viral RNA replication by recruiting ACBD3 and PI4KB at the viral replication sites, thereby allowing the formation of the rearranged membranous structures where viral replication takes place. Functionally, acts as a primer for viral RNA replication and remains covalently bound to viral genomic RNA. VPg is uridylylated prior to priming replication into VPg-pUpU. The VPg-pUpU is then used as primer on the genomic RNA poly(A) by the RNA-dependent RNA polymerase to replicate the viral genome. Following genome release from the infecting virion in the cytoplasm, the VPg-RNA linkage is probably removed by host TDP2. During the late stage of the replication cycle, host TDP2 is excluded from sites of viral RNA synthesis and encapsidation, allowing for the generation of progeny virions. Its function is as follows. Cysteine protease that generates mature viral proteins from the precursor polyprotein. In addition to its proteolytic activity, it binds to viral RNA, and thus influences viral genome replication. RNA and substrate bind cooperatively to the protease. Replicates the viral genomic RNA on the surface of intracellular membranes. Covalently attaches UMP to a tyrosine of VPg, which is used to prime RNA synthesis. The positive stranded RNA genome is first replicated at virus induced membranous vesicles, creating a dsRNA genomic replication form. This dsRNA is then used as template to synthesize positive stranded RNA genomes. ss(+)RNA genomes are either translated, replicated or encapsidated. In Ljunganvirus 1 (LV), this protein is Genome polyprotein.